Reading from the N-terminus, the 339-residue chain is DNA-directed RNA polymerase subunit alpha (339 aa).

An alpha N-terminal domain (alpha-NTD) region spans residues 1–233 (MVREEVAGST…DLFLPFLHAE (233 aa)). The segment at 264–339 (KKGIPLNCIF…IDLLKNKLSF (76 aa)) is alpha C-terminal domain (alpha-CTD).

This sequence belongs to the RNA polymerase alpha chain family. As to quaternary structure, in plastids the minimal PEP RNA polymerase catalytic core is composed of four subunits: alpha, beta, beta', and beta''. When a (nuclear-encoded) sigma factor is associated with the core the holoenzyme is formed, which can initiate transcription.

The protein resides in the plastid. It localises to the chloroplast. The enzyme catalyses RNA(n) + a ribonucleoside 5'-triphosphate = RNA(n+1) + diphosphate. Functionally, DNA-dependent RNA polymerase catalyzes the transcription of DNA into RNA using the four ribonucleoside triphosphates as substrates. The chain is DNA-directed RNA polymerase subunit alpha from Eremopyrum distans.